The primary structure comprises 217 residues: Imidazole glycerol phosphate synthase subunit HisH (217 aa).

Residues 5-217 (RVGIINYGVG…LRLLANFLTL (213 aa)) form the Glutamine amidotransferase type-1 domain. The active-site Nucleophile is Cys93. Catalysis depends on residues His199 and Glu201.

As to quaternary structure, heterodimer of HisH and HisF.

It localises to the cytoplasm. The catalysed reaction is 5-[(5-phospho-1-deoxy-D-ribulos-1-ylimino)methylamino]-1-(5-phospho-beta-D-ribosyl)imidazole-4-carboxamide + L-glutamine = D-erythro-1-(imidazol-4-yl)glycerol 3-phosphate + 5-amino-1-(5-phospho-beta-D-ribosyl)imidazole-4-carboxamide + L-glutamate + H(+). It carries out the reaction L-glutamine + H2O = L-glutamate + NH4(+). The protein operates within amino-acid biosynthesis; L-histidine biosynthesis; L-histidine from 5-phospho-alpha-D-ribose 1-diphosphate: step 5/9. Its function is as follows. IGPS catalyzes the conversion of PRFAR and glutamine to IGP, AICAR and glutamate. The HisH subunit catalyzes the hydrolysis of glutamine to glutamate and ammonia as part of the synthesis of IGP and AICAR. The resulting ammonia molecule is channeled to the active site of HisF. The chain is Imidazole glycerol phosphate synthase subunit HisH from Helicobacter hepaticus (strain ATCC 51449 / 3B1).